The primary structure comprises 189 residues: MSRIGKLPISIPAGVTVTLKDDVVTVKGPKGELSQYVNPAINVAIEDGHVTLTENEKEMIDNPKQKHAFHGLYRSLVHNMVVGVSEGYKKELELVGVGYRASNQGNIIELALGYTHNIFIQLPAEVKVETKSERNKNPLIILESCDKQLLGQVCSKIRSFRKPEPYKGKGIKFVGEVIRRKSGKSAGAK.

This sequence belongs to the universal ribosomal protein uL6 family. In terms of assembly, part of the 50S ribosomal subunit.

In terms of biological role, this protein binds to the 23S rRNA, and is important in its secondary structure. It is located near the subunit interface in the base of the L7/L12 stalk, and near the tRNA binding site of the peptidyltransferase center. This chain is Large ribosomal subunit protein uL6, found in Bacteroides thetaiotaomicron (strain ATCC 29148 / DSM 2079 / JCM 5827 / CCUG 10774 / NCTC 10582 / VPI-5482 / E50).